A 364-amino-acid chain; its full sequence is Caffeic acid 3-O-methyltransferase 2 (364 aa).

129-135 (MNQDKVL) serves as a coordination point for substrate. The substrate binding stretch occupies residues 161 to 179 (AFEYHGTDPRFNKVFNKGM). Residues Gly207, Asp230, Asp250, Met251, and Lys264 each contribute to the S-adenosyl-L-methionine site. His268 (proton acceptor) is an active-site residue.

The protein belongs to the class I-like SAM-binding methyltransferase superfamily. Cation-independent O-methyltransferase family. COMT subfamily. As to quaternary structure, homodimer.

The enzyme catalyses (E)-caffeate + S-adenosyl-L-methionine = (E)-ferulate + S-adenosyl-L-homocysteine + H(+). Its pathway is aromatic compound metabolism; phenylpropanoid biosynthesis. Its function is as follows. Catalyzes the conversion of caffeic acid to ferulic acid and of 5-hydroxyferulic acid to sinapic acid. The resulting products may subsequently be converted to the corresponding alcohols that are incorporated into lignins. This Populus tremuloides (Quaking aspen) protein is Caffeic acid 3-O-methyltransferase 2 (OMT2).